The sequence spans 180 residues: Shikimate kinase (180 aa).

An ATP-binding site is contributed by 14–19; it reads GAGKTC. Mg(2+) is bound at residue T18. Substrate-binding residues include D36, R60, and G82. R120 provides a ligand contact to ATP. Position 139 (R139) interacts with substrate.

The protein belongs to the shikimate kinase family. As to quaternary structure, monomer. Mg(2+) is required as a cofactor.

The protein resides in the cytoplasm. It catalyses the reaction shikimate + ATP = 3-phosphoshikimate + ADP + H(+). It functions in the pathway metabolic intermediate biosynthesis; chorismate biosynthesis; chorismate from D-erythrose 4-phosphate and phosphoenolpyruvate: step 5/7. Functionally, catalyzes the specific phosphorylation of the 3-hydroxyl group of shikimic acid using ATP as a cosubstrate. This chain is Shikimate kinase, found in Stenotrophomonas maltophilia (strain K279a).